We begin with the raw amino-acid sequence, 1002 residues long: Chitin synthase II (1002 aa).

2 disordered regions span residues 1-165 (MDRP…GRTS) and 178-209 (LDGS…SGSQ). Low complexity predominate over residues 63-78 (SYQPSVVSSHSRSASV). N-linked (GlcNAc...) asparagine glycosylation is present at asparagine 123. Residue asparagine 336 is glycosylated (N-linked (GlcNAc...) asparagine). Transmembrane regions (helical) follow at residues 627–647 (WLNG…QILA), 669–689 (LLFT…VAGG), 704–724 (SVIF…QFIL), 740–760 (SMII…YIVV), 780–800 (LIVS…LYLE), 808–828 (SLQY…YAFC), 906–926 (YMVV…SEIY), and 940–960 (ILWA…TFAI).

It belongs to the chitin synthase family. Class II subfamily. As to expression, expressed in hyphal bodies.

It localises to the cell membrane. The catalysed reaction is [(1-&gt;4)-N-acetyl-beta-D-glucosaminyl](n) + UDP-N-acetyl-alpha-D-glucosamine = [(1-&gt;4)-N-acetyl-beta-D-glucosaminyl](n+1) + UDP + H(+). Polymerizes chitin, a structural polymer of the cell wall and septum, by transferring the sugar moiety of UDP-GlcNAc to the non-reducing end of the growing chitin polymer. Contributes to the production of conidia and the ability of fungal conidia to germinate. Involved in fungal stress tolerances. The sequence is that of Chitin synthase II from Metarhizium acridum (strain CQMa 102).